The chain runs to 151 residues: NADPH-dependent 7-cyano-7-deazaguanine reductase (151 aa).

Cys-51 functions as the Thioimide intermediate in the catalytic mechanism. The Proton donor role is filled by Asp-58. Substrate is bound by residues 73-75 and 92-93; these read VES and HE.

Belongs to the GTP cyclohydrolase I family. QueF type 1 subfamily.

It localises to the cytoplasm. It catalyses the reaction 7-aminomethyl-7-carbaguanine + 2 NADP(+) = 7-cyano-7-deazaguanine + 2 NADPH + 3 H(+). Its pathway is tRNA modification; tRNA-queuosine biosynthesis. Catalyzes the NADPH-dependent reduction of 7-cyano-7-deazaguanine (preQ0) to 7-aminomethyl-7-deazaguanine (preQ1). This Bacteroides fragilis (strain YCH46) protein is NADPH-dependent 7-cyano-7-deazaguanine reductase.